Reading from the N-terminus, the 906-residue chain is Cadherin-2 (906 aa).

The N-terminal stretch at 1 to 25 (MCRIAGAPRTLLPLLAALLQASVEA) is a signal peptide. Residues 26 to 159 (SGEIALCKTG…HSGALQRQKR (134 aa)) constitute a propeptide that is removed on maturation. 5 Cadherin domains span residues 160–267 (DWVI…RPEF), 268–382 (LHQV…PPEF), 383–497 (TAMT…NPYF), 498–603 (APNP…DNAP), and 604–717 (QVLP…RIVG). Residues 160 to 724 (DWVIPPINLP…IVGAGLGTGA (565 aa)) lie on the Extracellular side of the membrane. E170 contacts Ca(2+). N190 carries N-linked (GlcNAc...) asparagine glycosylation. The Ca(2+) site is built by D226, E228, D259, M260, N261, D262, and N263. N273 carries an N-linked (GlcNAc...) asparagine glycan. D293, D295, and N301 together coordinate Ca(2+). An N-linked (GlcNAc...) asparagine glycan is attached at N325. D353 is a binding site for Ca(2+). N402, N572, N651, and N692 each carry an N-linked (GlcNAc...) asparagine glycan. Residues 725–745 (IIAILLCIIILLILVLMFVVW) traverse the membrane as a helical segment. Over 746–906 (MKRRDKERQA…LADMYGGGDD (161 aa)) the chain is Cytoplasmic. Over residues 863-880 (SGSTAGSLSSLNSSSSGG) the composition is skewed to low complexity. Residues 863-883 (SGSTAGSLSSLNSSSSGGDQD) form a disordered region.

Homodimer (via extracellular region). Can also form heterodimers with other cadherins (via extracellular region). Dimerization occurs in trans, i.e. with a cadherin chain from another cell. Interacts with CDCP1. Interacts with PCDH8; this complex may also include TAOK2. The interaction with PCDH8 may lead to internalization through TAOK2/p38 MAPK pathway. Identified in a complex containing FGFR4, NCAM1, CDH2, PLCG1, FRS2, SRC, SHC1, GAP43 and CTTN. May interact with OBSCN (via protein kinase domain 2). Interacts with FBXO45. In terms of processing, cleaved by MMP24. Ectodomain cleavage leads to the generation of a soluble 90 kDa N-terminal soluble fragment and a 45 kDa membrane-bound C-terminal fragment 1 (CTF1), which is further cleaved by gamma-secretase into a 35 kDa. Cleavage in neural stem cells by MMP24 affects CDH2-mediated anchorage of neural stem cells to ependymocytes in the adult subependymal zone, leading to modulate neural stem cell quiescence. Post-translationally, may be phosphorylated by OBSCN. O-glycosylated on Ser and Thr residues. In terms of tissue distribution, expressed in cardiac muscle (at protein level).

Its subcellular location is the cell membrane. It localises to the sarcolemma. The protein localises to the cell junction. The protein resides in the adherens junction. It is found in the desmosome. Its subcellular location is the cell surface. Functionally, calcium-dependent cell adhesion protein; preferentially mediates homotypic cell-cell adhesion by dimerization with a CDH2 chain from another cell. Cadherins may thus contribute to the sorting of heterogeneous cell types. Acts as a regulator of neural stem cells quiescence by mediating anchorage of neural stem cells to ependymocytes in the adult subependymal zone: upon cleavage by MMP24, CDH2-mediated anchorage is affected, leading to modulate neural stem cell quiescence. Plays a role in cell-to-cell junction formation between pancreatic beta cells and neural crest stem (NCS) cells, promoting the formation of processes by NCS cells. Required for proper neurite branching. Required for pre- and postsynaptic organization. CDH2 may be involved in neuronal recognition mechanism. In hippocampal neurons, may regulate dendritic spine density. The chain is Cadherin-2 (Cdh2) from Mus musculus (Mouse).